The sequence spans 445 residues: 23S rRNA (uracil(1939)-C(5))-methyltransferase RlmD (445 aa).

The region spanning 6–64 (RRLPREPFEIAITGLSHEGRGIAHHDERTLFVHGALPGERVRAVYTKRRRSVAEARVVE) is the TRAM domain. The [4Fe-4S] cluster site is built by Cys-77, Cys-83, Cys-86, and Cys-165. Positions 274, 303, 308, 324, 351, and 372 each coordinate S-adenosyl-L-methionine. Cys-398 serves as the catalytic Nucleophile.

Belongs to the class I-like SAM-binding methyltransferase superfamily. RNA M5U methyltransferase family. RlmD subfamily.

The catalysed reaction is uridine(1939) in 23S rRNA + S-adenosyl-L-methionine = 5-methyluridine(1939) in 23S rRNA + S-adenosyl-L-homocysteine + H(+). Its function is as follows. Catalyzes the formation of 5-methyl-uridine at position 1939 (m5U1939) in 23S rRNA. The protein is 23S rRNA (uracil(1939)-C(5))-methyltransferase RlmD of Alkalilimnicola ehrlichii (strain ATCC BAA-1101 / DSM 17681 / MLHE-1).